A 53-amino-acid polypeptide reads, in one-letter code: UPF0391 membrane protein BP1737 (53 aa).

The next 2 helical transmembrane spans lie at alanine 5–alanine 25 and isoleucine 30–valine 50.

It belongs to the UPF0391 family.

The protein localises to the cell membrane. The protein is UPF0391 membrane protein BP1737 of Bordetella pertussis (strain Tohama I / ATCC BAA-589 / NCTC 13251).